Here is a 154-residue protein sequence, read N- to C-terminus: Mitochondrial fission 1 protein (154 aa).

The Cytoplasmic segment spans residues 1–124; that stretch reads MEDLLNEVVP…KEIDKEVAKG (124 aa). Residues 125–145 form a helical membrane-spanning segment; the sequence is MVVAGGAALVLGGILGLGIAM. At 146–154 the chain is on the mitochondrial intermembrane side; the sequence is ARNKQKREK.

This sequence belongs to the FIS1 family.

It is found in the mitochondrion outer membrane. Involved in the fragmentation of the mitochondrial network and its perinuclear clustering. Functions downstream of Pink1 and upstream of Drp1 to regulate mitochondrial fission. The sequence is that of Mitochondrial fission 1 protein from Drosophila melanogaster (Fruit fly).